The chain runs to 319 residues: Glutathione synthetase (319 aa).

The ATP-grasp domain occupies 129–314 (KLAILNFSRF…VAAMFADAVA (186 aa)). Position 155–211 (155–211 (LKEHGDIIIKPLDGMGGMGIFRLTEKDPNIGSILETLMQLDSRTIMAQRYIPEIVHG)) interacts with ATP. Mg(2+) is bound by residues E285 and N287.

The protein belongs to the prokaryotic GSH synthase family. Mg(2+) serves as cofactor. The cofactor is Mn(2+).

It catalyses the reaction gamma-L-glutamyl-L-cysteine + glycine + ATP = glutathione + ADP + phosphate + H(+). The protein operates within sulfur metabolism; glutathione biosynthesis; glutathione from L-cysteine and L-glutamate: step 2/2. The sequence is that of Glutathione synthetase from Neisseria meningitidis serogroup B (strain ATCC BAA-335 / MC58).